Reading from the N-terminus, the 394-residue chain is Class II hydrophobin TH1 (394 aa).

A signal peptide spans 1-16; sequence MKFLAAASLLVASTLA. Residues 17 to 42 form a disordered region; sequence VPTSSGGSCRPRPPPGGGNGGNGGNG. Over residues 33–42 the composition is skewed to gly residues; sequence GGNGGNGGNG. The segment at 48 to 117 is hydrophobin 1; it reads GYQPCPAGLY…GQAVLCQDSI (70 aa). Intrachain disulfides connect Cys-52/Cys-101, Cys-62/Cys-92, Cys-63/Cys-75, and Cys-102/Cys-113. A disordered region spans residues 135-157; that stretch reads GNGGNNGGNTDYPGGNGGNNGGN. Residues 148–157 are compositionally biased toward gly residues; sequence GGNGGNNGGN. 2 hydrophobin regions span residues 200–270 and 326–394; these read GYQA…QPAI and GSFK…CTGA.

The protein belongs to the cerato-ulmin hydrophobin family. As to quaternary structure, homotetramer. Further self-assembles to form highly ordered films at water-air interfaces through intermolecular interactions. Several N-termini starting at positions 17, 20, 22, 28 and 48 have been identified by direct sequencing. In terms of processing, contains a number of intrachain disulfide bonds. Post-translationally, not glycosylated.

It localises to the secreted. The protein localises to the cell wall. Functionally, aerial growth, conidiation, and dispersal of filamentous fungi in the environment rely upon a capability of their secreting small amphipathic proteins called hydrophobins (HPBs) with low sequence identity. Class I can self-assemble into an outermost layer of rodlet bundles on aerial cell surfaces, conferring cellular hydrophobicity that supports fungal growth, development and dispersal; whereas Class II form highly ordered films at water-air interfaces through intermolecular interactions but contribute nothing to the rodlet structure. TH1 is a class II hydrophobin that reduces water surface tension dramatically upon assembly at the water-air interface and plays a role in the formation of aerial hyphae. This is Class II hydrophobin TH1 (TH1) from Claviceps fusiformis (Ergot fungus).